The sequence spans 1170 residues: Type I restriction enzyme EcoKI endonuclease subunit (1170 aa).

Residues 143-229 adopt a coiled-coil conformation; the sequence is YHQEVLTLKQ…QERKAYHKEI (87 aa). Residues 431–450 constitute a DNA-binding region (H-T-H motif); it reads NQWFADNPGMSELGLRYYQE. Residues 458 to 639 enclose the Helicase ATP-binding domain; it reads KAIVKGQQEI…GEPVYRYTYR (182 aa). 472–478 provides a ligand contact to ATP; that stretch reads ATGTGKT. The short motif at 574-577 is the DEAH box element; sequence DEAH. Positions 714–879 constitute a Helicase C-terminal domain; that stretch reads ELTNYLDPTG…TLVNEITDSE (166 aa).

It belongs to the HsdR family. In terms of assembly, the type I restriction/modification system is composed of three polypeptides R, M and S. The restriction enzyme has stoichiometry R(2)M(2)S(1). The methyltransferase is composed of M(2)S(1). As to quaternary structure, (Microbial infection) Interacts with Escherichia phage T7 protein Ocr; this interaction leads to the inhibition of the type I bifunctional endonuclease and methyltransferase restriction enzyme R.EcoKI composed of R(2)M(2)S(1). Upon purification after overexpression about one-third has the initiating methionine removed.

The catalysed reaction is Endonucleolytic cleavage of DNA to give random double-stranded fragments with terminal 5'-phosphates, ATP is simultaneously hydrolyzed.. The subtype A restriction (R) subunit of a type I restriction enzyme that recognizes 5'-AACN(6)GTGC-3' and cleaves a random distance away. The R subunit is required for both endonuclease and ATPase activities but not for modification. Has endonucleolytic activity that requires Mg(2+), ATP and S-adenosyl-L-methionine (SAM); ATP can be replaced by dATP, no tested molecule could substitute for SAM. Generates double-stranded DNA with no nicks, by cutting one strand then the other within a few seconds. Cleaves only non-methylated DNA, hemi-methylated and fully methylated DNA are not substrates. After locating a non-methylated recognition site, the enzyme complex serves as a molecular motor that translocates DNA in an ATP-dependent manner until a collision occurs that triggers cleavage. In Escherichia coli (strain K12), this protein is Type I restriction enzyme EcoKI endonuclease subunit.